The chain runs to 286 residues: Beta-lactamase SHV-8 (286 aa).

An N-terminal signal peptide occupies residues 1 to 21 (MRYIRLCIISLLATLPLAVHA). Ser-66 acts as the Acyl-ester intermediate in catalysis. Residues Cys-73 and Cys-119 are joined by a disulfide bond. Glu-164 functions as the Proton acceptor in the catalytic mechanism. 230–232 (KTG) serves as a coordination point for substrate.

It belongs to the class-A beta-lactamase family.

It catalyses the reaction a beta-lactam + H2O = a substituted beta-amino acid. SHV enzymes hydrolyze broad spectrum cephalosporins notably cefotaxime and ceftazidime. The chain is Beta-lactamase SHV-8 (bla) from Escherichia coli.